The chain runs to 84 residues: Small ribosomal subunit protein uS17 (84 aa).

This sequence belongs to the universal ribosomal protein uS17 family. Part of the 30S ribosomal subunit.

One of the primary rRNA binding proteins, it binds specifically to the 5'-end of 16S ribosomal RNA. This Karelsulcia muelleri (strain GWSS) (Sulcia muelleri) protein is Small ribosomal subunit protein uS17.